A 559-amino-acid polypeptide reads, in one-letter code: MNESFAQLFEESLKEIKTRPGSIIRGTIVSIEKDIVLVDAGLKSESAIPVEQFKNAQGLLDVKVGDQIDVALDAIEDGFGETLLSREKAKRHEAWLILEQAHEKSETVIGIINGKVKGGFTVELNEIRAFLPGSLVDVRPVRDTIHLEGKELEFKVIKLDQKRNNVVVSRRAVIESENSAERDQLLESLQEGIEIKGIVKNLTDYGAFVDLGGVDGLLHITDMAWKRVKHPSEIVNVGDEINVKILKFDKERTRVSLGLKQLGEDPWIAISNRYPEGIKLSGRVTNLTDYGCFVEIEEGVEGLVHVSEMDWTNKNIHPSKVVAVNNIVDVIVLDIDEERRRISLGLKQCKINPWQEFSETHKKGIHVSGKIKSITDFGIFIGLKGGIDGLVHLSDISWKISGEEAVKNYKKGDEISAVVLQVDAERERISLGIKQLEEDPFNVYVSNHKKGAIITGIIKDFDKKTVTVKLSDGVEGNIKFSDSSRVNSEEIIKKLKIDDTILVKISNFDRKNRIINLTFHILDENNNKKDLKNKINVKSNDESFSNVMAEAFKAAQNTE.

S1 motif domains lie at 21-87 (GSII…LSRE), 105-171 (SETV…VSRR), 192-260 (GIEI…LGLK), 277-347 (GIKL…LGLK), 364-434 (GIHV…LGIK), and 451-520 (GAII…LTFH).

Belongs to the bacterial ribosomal protein bS1 family.

Binds mRNA; thus facilitating recognition of the initiation point. It is needed to translate mRNA with a short Shine-Dalgarno (SD) purine-rich sequence. The protein is Small ribosomal subunit protein bS1 (rpsA) of Buchnera aphidicola subsp. Schizaphis graminum (strain Sg).